Consider the following 529-residue polypeptide: Peptide chain release factor 3 (529 aa).

Residues 11–280 (NKRRTFAIIS…GLTEWAPKPQ (270 aa)) enclose the tr-type G domain. Residues 20–27 (SHPDAGKT), 88–92 (DTPGH), and 142–145 (NKLD) contribute to the GTP site.

This sequence belongs to the TRAFAC class translation factor GTPase superfamily. Classic translation factor GTPase family. PrfC subfamily.

The protein localises to the cytoplasm. Increases the formation of ribosomal termination complexes and stimulates activities of RF-1 and RF-2. It binds guanine nucleotides and has strong preference for UGA stop codons. It may interact directly with the ribosome. The stimulation of RF-1 and RF-2 is significantly reduced by GTP and GDP, but not by GMP. The protein is Peptide chain release factor 3 of Mannheimia succiniciproducens (strain KCTC 0769BP / MBEL55E).